We begin with the raw amino-acid sequence, 175 residues long: Cell number regulator 9 (175 aa).

2 helical membrane-spanning segments follow: residues 53 to 73 (GLCCLTCWCPCITFGRIAEIV) and 80 to 100 (CGVAGTIYTLLACFTGCHWIY).

It belongs to the cornifelin family. In terms of tissue distribution, expressed in roots, coleoptiles, leaves and stalks.

The protein localises to the membrane. In Zea mays (Maize), this protein is Cell number regulator 9 (CNR9).